A 336-amino-acid chain; its full sequence is Atypical chemokine receptor 1 (336 aa).

Residues 1–63 are Extracellular-facing; the sequence is MGNCLHTAEL…CNLLDDSALP (63 aa). 3 N-linked (GlcNAc...) asparagine glycosylation sites follow: Asn-16, Asn-27, and Asn-33. Cystine bridges form between Cys-51–Cys-276 and Cys-129–Cys-195. A helical membrane pass occupies residues 64 to 84; it reads FFILTSVLGILASSTVLFILF. Residues 85 to 95 are Cytoplasmic-facing; that stretch reads RPLFRWQLCPG. Residues 96–116 traverse the membrane as a helical segment; sequence WPVLAQLAVGSALFSIVVPIL. Over 117-129 the chain is Extracellular; it reads APGLGSTHSSALC. Residues 130–153 traverse the membrane as a helical segment; it reads SLGYCVWYGSAFAQALLLGCHASL. Topologically, residues 154 to 166 are cytoplasmic; the sequence is GHRLGAGQVPGLT. Residues 167-187 traverse the membrane as a helical segment; sequence LGLTVGIWGVAALLTLPVTLA. The Extracellular portion of the chain corresponds to 188 to 207; it reads SGASGGLCTPIHSTELKALQ. A helical membrane pass occupies residues 208–228; sequence ATHTVACLAIFVLLPLGLFGA. Topologically, residues 229–244 are cytoplasmic; it reads KGLKKALGMGPGPWMN. A helical membrane pass occupies residues 245–265; it reads ILWAWFIFWWPHGVVLGLDFL. At 266-287 the chain is on the extracellular side; that stretch reads VRSKLLLLSTCLAQQALDLLLN. A helical transmembrane segment spans residues 288-308; that stretch reads LAEALAILHCVATPLILALFY. At 309 to 336 the chain is on the cytoplasmic side; the sequence is HQATRTLLPSLPLPEGWSSHLDTLGSKS.

Belongs to the G-protein coupled receptor 1 family. Atypical chemokine receptor subfamily.

It is found in the early endosome. It localises to the recycling endosome. The protein localises to the membrane. Atypical chemokine receptor that controls chemokine levels and localization via high-affinity chemokine binding that is uncoupled from classic ligand-driven signal transduction cascades, resulting instead in chemokine sequestration, degradation, or transcytosis. Also known as interceptor (internalizing receptor) or chemokine-scavenging receptor or chemokine decoy receptor. Has a promiscuous chemokine-binding profile, interacting with inflammatory chemokines of both the CXC and the CC subfamilies but not with homeostatic chemokines. Acts as a receptor for chemokines including CCL2, CCL5, CCL7, CCL11, CCL13, CCL14, CCL17, CXCL5, CXCL6, IL8/CXCL8, CXCL11, GRO, RANTES, MCP-1 and TARC. May regulate chemokine bioavailability and, consequently, leukocyte recruitment through two distinct mechanisms: when expressed in endothelial cells, it sustains the abluminal to luminal transcytosis of tissue-derived chemokines and their subsequent presentation to circulating leukocytes; when expressed in erythrocytes, serves as blood reservoir of cognate chemokines but also as a chemokine sink, buffering potential surges in plasma chemokine levels. This chain is Atypical chemokine receptor 1 (ACKR1), found in Gorilla gorilla gorilla (Western lowland gorilla).